The primary structure comprises 152 residues: Small ribosomal subunit protein uS13z/uS13y/uS13x (152 aa).

Residue Ser-2 is modified to N-acetylserine.

The protein belongs to the universal ribosomal protein uS13 family.

Its subcellular location is the cytoplasm. Functionally, located at the top of the head of the 40S subunit, it contacts several helices of the 18S rRNA. This Arabidopsis thaliana (Mouse-ear cress) protein is Small ribosomal subunit protein uS13z/uS13y/uS13x (RPS18A).